A 29-amino-acid chain; its full sequence is Glucagon (29 aa).

Ser2 carries the phosphoserine modification.

This sequence belongs to the glucagon family.

It is found in the secreted. Its function is as follows. Glucagon plays a key role in glucose metabolism and homeostasis. Regulates blood glucose by increasing gluconeogenesis and decreasing glycolysis. The sequence is that of Glucagon (GCG) from Oryctolagus cuniculus (Rabbit).